Here is a 172-residue protein sequence, read N- to C-terminus: MAKTSARSIKPGELNLKEKLVHINRTAKVVKGGKRFGFNAIIVVGDKEGHVGYGLGKANEVQDAIAKGVEDGKKNVIKVPIVKGTIPHQIIAKYGSAKVLMKPATPGTGLIAGGAVRAVLEMAGIHDVLTKSLGSSNPHNVVKAAIKGLQSMSDAYEVGERRSKSLKEVFES.

The S5 DRBM domain maps to 16-79; the sequence is LKEKLVHINR…EDGKKNVIKV (64 aa).

This sequence belongs to the universal ribosomal protein uS5 family. In terms of assembly, part of the 30S ribosomal subunit. Contacts proteins S4 and S8.

With S4 and S12 plays an important role in translational accuracy. Functionally, located at the back of the 30S subunit body where it stabilizes the conformation of the head with respect to the body. This is Small ribosomal subunit protein uS5 from Chlorobium phaeobacteroides (strain DSM 266 / SMG 266 / 2430).